The following is a 549-amino-acid chain: Teichoic acids export ATP-binding protein TagH (549 aa).

An ABC transporter domain is found at 22–243 (DKLKDLFFRS…YDEFLKKYNQ (222 aa)). 57 to 64 (GLNGSGKS) lines the ATP pocket. Residues 244 to 549 (MSVEERKDLR…EIQSISIVKK (306 aa)) form a unknown region. The SH3b domain maps to 346–415 (AAKYIVNSNG…ISTKFIEPFK (70 aa)).

This sequence belongs to the ABC transporter superfamily. Teichoic acids exporter (TC 3.A.1.104.1) family. In terms of assembly, the complex is composed of two ATP-binding proteins (TagH) and two transmembrane proteins (TagG).

It is found in the cell membrane. It catalyses the reaction ATP + H2O + teichoic acidSide 1 = ADP + phosphate + teichoic acidSide 2.. In terms of biological role, part of the ABC transporter complex TagGH involved in teichoic acids export. Responsible for energy coupling to the transport system. In Bacillus anthracis, this protein is Teichoic acids export ATP-binding protein TagH.